A 240-amino-acid chain; its full sequence is tRNA (guanine-N(7)-)-methyltransferase (240 aa).

A disordered region spans residues 1 to 20 (MTESHDTPITSDGEARPHRR). S-adenosyl-L-methionine contacts are provided by Glu-70, Glu-95, Asp-122, and Asp-145. The active site involves Asp-145. Residues Lys-149, Asp-181, and 218–221 (TKFE) contribute to the substrate site.

The protein belongs to the class I-like SAM-binding methyltransferase superfamily. TrmB family.

The catalysed reaction is guanosine(46) in tRNA + S-adenosyl-L-methionine = N(7)-methylguanosine(46) in tRNA + S-adenosyl-L-homocysteine. Its pathway is tRNA modification; N(7)-methylguanine-tRNA biosynthesis. Functionally, catalyzes the formation of N(7)-methylguanine at position 46 (m7G46) in tRNA. The sequence is that of tRNA (guanine-N(7)-)-methyltransferase from Pseudomonas putida (strain ATCC 700007 / DSM 6899 / JCM 31910 / BCRC 17059 / LMG 24140 / F1).